The chain runs to 817 residues: Probable inorganic carbon transporter subunit DabA (817 aa).

4 residues coordinate Zn(2+): Cys301, Asp303, His491, and Cys506. 2 disordered regions span residues 598-617 and 794-817; these read NTSV…ERRA and GWHA…GVPS.

The protein belongs to the inorganic carbon transporter (TC 9.A.2) DabA family. As to quaternary structure, forms a complex with DabB. Zn(2+) serves as cofactor.

It localises to the cell inner membrane. In terms of biological role, part of an energy-coupled inorganic carbon pump. The chain is Probable inorganic carbon transporter subunit DabA from Salinibacter ruber (strain DSM 13855 / M31).